A 385-amino-acid polypeptide reads, in one-letter code: Trehalose-phosphate phosphatase A (385 aa).

Residues 1–21 (MDMKSGHSSPVMTDSPPISNS) are disordered.

This sequence belongs to the trehalose phosphatase family. A divalent metal cation is required as a cofactor. As to expression, expressed in flowers.

The enzyme catalyses alpha,alpha-trehalose 6-phosphate + H2O = alpha,alpha-trehalose + phosphate. The protein operates within glycan biosynthesis; trehalose biosynthesis. Functionally, removes the phosphate from trehalose 6-phosphate to produce free trehalose. Trehalose accumulation in plant may improve abiotic stress tolerance. The polypeptide is Trehalose-phosphate phosphatase A (TPPA) (Arabidopsis thaliana (Mouse-ear cress)).